The following is a 257-amino-acid chain: Imidazole glycerol phosphate synthase subunit hisF1 (257 aa).

Active-site residues include D11 and D130.

The protein belongs to the HisA/HisF family. As to quaternary structure, heterodimer of HisH and HisF.

The protein resides in the cytoplasm. The enzyme catalyses 5-[(5-phospho-1-deoxy-D-ribulos-1-ylimino)methylamino]-1-(5-phospho-beta-D-ribosyl)imidazole-4-carboxamide + L-glutamine = D-erythro-1-(imidazol-4-yl)glycerol 3-phosphate + 5-amino-1-(5-phospho-beta-D-ribosyl)imidazole-4-carboxamide + L-glutamate + H(+). It functions in the pathway amino-acid biosynthesis; L-histidine biosynthesis; L-histidine from 5-phospho-alpha-D-ribose 1-diphosphate: step 5/9. Its function is as follows. IGPS catalyzes the conversion of PRFAR and glutamine to IGP, AICAR and glutamate. The HisF subunit catalyzes the cyclization activity that produces IGP and AICAR from PRFAR using the ammonia provided by the HisH subunit. The chain is Imidazole glycerol phosphate synthase subunit hisF1 (hisF1) from Vibrio vulnificus (strain YJ016).